The primary structure comprises 465 residues: Adenosylhomocysteinase (465 aa).

Positions 56, 131, and 191 each coordinate substrate. Residue 192–194 (TTT) coordinates NAD(+). Positions 221 and 225 each coordinate substrate. Residues Asn226, 255 to 260 (GYGDVG), Glu278, Asn313, 334 to 336 (IGH), and Asn379 each bind NAD(+).

This sequence belongs to the adenosylhomocysteinase family. NAD(+) is required as a cofactor.

It localises to the cytoplasm. It carries out the reaction S-adenosyl-L-homocysteine + H2O = L-homocysteine + adenosine. Its pathway is amino-acid biosynthesis; L-homocysteine biosynthesis; L-homocysteine from S-adenosyl-L-homocysteine: step 1/1. May play a key role in the regulation of the intracellular concentration of adenosylhomocysteine. The protein is Adenosylhomocysteinase of Bartonella henselae (strain ATCC 49882 / DSM 28221 / CCUG 30454 / Houston 1) (Rochalimaea henselae).